The chain runs to 467 residues: Mitochondrial distribution and morphology protein 10 (467 aa).

The protein belongs to the MDM10 family. Component of the ER-mitochondria encounter structure (ERMES) or MDM complex, composed of MMM1, MDM10, MDM12 and MDM34. Associates with the mitochondrial outer membrane sorting assembly machinery SAM(core) complex.

It is found in the mitochondrion outer membrane. Functionally, component of the ERMES/MDM complex, which serves as a molecular tether to connect the endoplasmic reticulum and mitochondria. Components of this complex are involved in the control of mitochondrial shape and protein biogenesis and may function in phospholipid exchange. MDM10 is involved in the late assembly steps of the general translocase of the mitochondrial outer membrane (TOM complex). Functions in the TOM40-specific route of the assembly of outer membrane beta-barrel proteins, including the association of TOM40 with the receptor TOM22 and small TOM proteins. Can associate with the SAM(core) complex as well as the MDM12-MMM1 complex, both involved in late steps of the major beta-barrel assembly pathway, that is responsible for biogenesis of all outer membrane beta-barrel proteins. May act as a switch that shuttles between both complexes and channels precursor proteins into the TOM40-specific pathway. Plays a role in mitochondrial morphology and in the inheritance of mitochondria. This Ajellomyces capsulatus (strain G186AR / H82 / ATCC MYA-2454 / RMSCC 2432) (Darling's disease fungus) protein is Mitochondrial distribution and morphology protein 10.